We begin with the raw amino-acid sequence, 289 residues long: tRNA pseudouridine synthase B (289 aa).

Residue Asp-38 is the Nucleophile of the active site.

The protein belongs to the pseudouridine synthase TruB family. Type 1 subfamily.

It carries out the reaction uridine(55) in tRNA = pseudouridine(55) in tRNA. Its function is as follows. Responsible for synthesis of pseudouridine from uracil-55 in the psi GC loop of transfer RNAs. The sequence is that of tRNA pseudouridine synthase B from Acaryochloris marina (strain MBIC 11017).